Reading from the N-terminus, the 636-residue chain is DNA ligase (636 aa).

Lysine 113 serves as the catalytic N6-AMP-lysine intermediate. The BRCT domain occupies 560–636; the sequence is NSEGIFQNQT…KSSFSKKFEK (77 aa).

This sequence belongs to the NAD-dependent DNA ligase family.

It catalyses the reaction NAD(+) + (deoxyribonucleotide)n-3'-hydroxyl + 5'-phospho-(deoxyribonucleotide)m = (deoxyribonucleotide)n+m + AMP + beta-nicotinamide D-nucleotide.. Its function is as follows. Catalyzes the formation of phosphodiester linkages between 5'-phosphoryl and 3'-hydroxyl groups in double-stranded DNA using NAD as a coenzyme and as the energy source for the reaction. This chain is DNA ligase, found in Acanthamoeba polyphaga (Amoeba).